The chain runs to 326 residues: Archaeal actin homolog (326 aa).

ATP is bound by residues 10–14 (YGDTK), S179, Q231, 285–288 (GGSN), and Q311.

Belongs to the thermophilic archaeal actin family.

In terms of biological role, polymerizes into bundles of filaments, forming a helix with a filament width of 5.5 nm and an axial repeating unit of 5.5 nm. Polymerization of Ta0583 requires NTP and is optimal with ATP, but GTP, UTP, CTP, and even the deoxy form of NTP can also support the polymerization reaction. Nucleoside diphosphate or AMP-PNP does not support polymerization. The chain is Archaeal actin homolog from Thermoplasma acidophilum (strain ATCC 25905 / DSM 1728 / JCM 9062 / NBRC 15155 / AMRC-C165).